Reading from the N-terminus, the 112-residue chain is Protein SMALL AUXIN UP-REGULATED RNA 10 (112 aa).

It belongs to the ARG7 family. Confined to the veins and petioles of rosette leaves and cauline leaves, and specifically expressed at the abaxial side of inflorescence branche; relocates to both the adaxial (Ad) and abaxial (Ab) sides of the branch in reduced red:far-red (R:FR) light, during shade. Also present in flowers.

Its subcellular location is the cell membrane. Functionally, provide a mechanistic link between auxin and plasma membrane H(+)-ATPases (PM H(+)-ATPases, e.g. AHA1 and AHA2), and triggers PM H(+)-ATPases activity by promoting phosphorylation of their C-terminal autoinhibitory domain as a result of PP2C-D subfamily of type 2C phosphatases inhibition, thus leading to the acidification of the apoplast and the facilitation of solutes and water uptake to drive cell expansion. Triggers plant growth probably by promoting cell elongation. Regulates branch angles and bending. The sequence is that of Protein SMALL AUXIN UP-REGULATED RNA 10 from Arabidopsis thaliana (Mouse-ear cress).